The following is a 545-amino-acid chain: CTP synthase (545 aa).

Residues 1–266 form an amidoligase domain region; that stretch reads MTKNYIFITG…DDYICNYFKL (266 aa). Position 14 (Ser14) interacts with CTP. A UTP-binding site is contributed by Ser14. ATP contacts are provided by residues 15–20 and Asp72; that span reads SLGKGI. Mg(2+)-binding residues include Asp72 and Glu140. CTP is bound by residues 147–149, 187–192, and Lys223; these read DIE and KTKPTQ. Residues 187–192 and Lys223 contribute to the UTP site; that span reads KTKPTQ. 239–241 provides a ligand contact to ATP; that stretch reads KDV. The Glutamine amidotransferase type-1 domain occupies 291 to 543; it reads VIGIIGKYIK…IKSAGKHKKN (253 aa). Residue Gly352 coordinates L-glutamine. Catalysis depends on Cys379, which acts as the Nucleophile; for glutamine hydrolysis. Residues 380 to 383, Glu403, and Arg471 each bind L-glutamine; that span reads LGMQ. Catalysis depends on residues His516 and Glu518.

The protein belongs to the CTP synthase family. Homotetramer.

It carries out the reaction UTP + L-glutamine + ATP + H2O = CTP + L-glutamate + ADP + phosphate + 2 H(+). The enzyme catalyses L-glutamine + H2O = L-glutamate + NH4(+). The catalysed reaction is UTP + NH4(+) + ATP = CTP + ADP + phosphate + 2 H(+). Its pathway is pyrimidine metabolism; CTP biosynthesis via de novo pathway; CTP from UDP: step 2/2. With respect to regulation, allosterically activated by GTP, when glutamine is the substrate; GTP has no effect on the reaction when ammonia is the substrate. The allosteric effector GTP functions by stabilizing the protein conformation that binds the tetrahedral intermediate(s) formed during glutamine hydrolysis. Inhibited by the product CTP, via allosteric rather than competitive inhibition. Functionally, catalyzes the ATP-dependent amination of UTP to CTP with either L-glutamine or ammonia as the source of nitrogen. Regulates intracellular CTP levels through interactions with the four ribonucleotide triphosphates. The protein is CTP synthase of Buchnera aphidicola subsp. Acyrthosiphon pisum (strain Tuc7).